The following is a 469-amino-acid chain: MESLNGCVLSQLRQSGAQVTRTLQKIQSRSYSAPVSGSIPAAKKKYVPTSGTYPLGFSASGINVGVKPKNTTKPDVCLVASDRPCAAAAVFTKNKFQAAPVTFSRSLLQKKGNQGIQGVVVNSGCANAVTGKGGLEDAGKMAQAADECFGQSESTLVMSTGVIGQRLPIEKITSNIPRAHKAMGSTHDHWLTAAKAICTTDTFPKLISRSFKLPSSPSVEYRIAGMTKGAGMIHPNMATLLGIIATDAPVSSTVLPAVLKHAVDRSFNSITIDGDTSTNDTVALLANGAAGGKEVVANTPDYDAFQTVLTDFSTDLAKLIVRDGEGATKFVTIRVVEAASEEAARKIASTIARSPLVKTALYGKDANWGRILCATGYSLVSEPGLPVNDVSEVVPEKTNVSFIPTDGTAELKLLVNGEPEQVDEARAAEILELEDLEILVRLGTGDKQATYWTCDYSHEYITINGDYRT.

Substrate-binding residues include Thr-199, Lys-228, Thr-239, Glu-325, Asn-464, and Thr-469. Catalysis depends on Thr-239, which acts as the Nucleophile.

The protein belongs to the ArgJ family. Heterodimer of an alpha and a beta chain. The alpha and beta chains are autoproteolytically processed from a single precursor protein within the mitochondrion.

The protein resides in the mitochondrion matrix. It carries out the reaction N(2)-acetyl-L-ornithine + L-glutamate = N-acetyl-L-glutamate + L-ornithine. The enzyme catalyses L-glutamate + acetyl-CoA = N-acetyl-L-glutamate + CoA + H(+). It functions in the pathway amino-acid biosynthesis; L-arginine biosynthesis; L-ornithine and N-acetyl-L-glutamate from L-glutamate and N(2)-acetyl-L-ornithine (cyclic): step 1/1. Its pathway is amino-acid biosynthesis; L-arginine biosynthesis; N(2)-acetyl-L-ornithine from L-glutamate: step 1/4. Catalyzes two activities which are involved in the cyclic version of arginine biosynthesis: the synthesis of acetylglutamate from glutamate and acetyl-CoA, and of ornithine by transacetylation between acetylornithine and glutamate. This chain is Arginine biosynthesis bifunctional protein ArgJ, mitochondrial, found in Neurospora crassa (strain ATCC 24698 / 74-OR23-1A / CBS 708.71 / DSM 1257 / FGSC 987).